We begin with the raw amino-acid sequence, 258 residues long: 1-(5-phosphoribosyl)-5-[(5-phosphoribosylamino)methylideneamino] imidazole-4-carboxamide isomerase (258 aa).

Asp9 acts as the Proton acceptor in catalysis. The active-site Proton donor is Asp131.

This sequence belongs to the HisA/HisF family.

Its subcellular location is the cytoplasm. It catalyses the reaction 1-(5-phospho-beta-D-ribosyl)-5-[(5-phospho-beta-D-ribosylamino)methylideneamino]imidazole-4-carboxamide = 5-[(5-phospho-1-deoxy-D-ribulos-1-ylimino)methylamino]-1-(5-phospho-beta-D-ribosyl)imidazole-4-carboxamide. It functions in the pathway amino-acid biosynthesis; L-histidine biosynthesis; L-histidine from 5-phospho-alpha-D-ribose 1-diphosphate: step 4/9. The protein is 1-(5-phosphoribosyl)-5-[(5-phosphoribosylamino)methylideneamino] imidazole-4-carboxamide isomerase of Salinibacter ruber (strain DSM 13855 / M31).